A 299-amino-acid chain; its full sequence is Putative transposase InsZ (299 aa).

The span at 276 to 291 (PSRPRSVKISKTRYPV) shows a compositional bias: basic residues. A disordered region spans residues 276-299 (PSRPRSVKISKTRYPVKHSAAPLK).

The polypeptide is Putative transposase InsZ (insZ) (Escherichia coli (strain K12)).